We begin with the raw amino-acid sequence, 349 residues long: MDFELEPTLESIIHQDSLKWIFVGGKGGVGKTTTSSSVAVQLALAYPNDEFLLISTDPAHNLSDAFCQKFGKDARKVEGLSNLSCMEIDPDAAMSDLQTQAQQYNNDPNDPLKSMMSDMTGSIPGIDEALSFMEVLKHIKNQRAADDGSESNAIQYKTIIFDTAPTGHTLRFLQLPATLEKLLAKFKDLSGKFGPMLNMLGGGTNQQQDIFSKMNEIQKSVSEVNEQFTNPDMTTFICVCISEFLSLYETERMIQELMSYNMDVNSIVVNQLLFAEEDDCKRCQSRWKMQKKYLDQMGELYEDYHLVKMPLLGSEIRGVNNLKKFSKFLLKPYDPKVDKALVFELEEAK.

Residue 26-33 coordinates ATP; the sequence is KGGVGKTT. Asp57 is a catalytic residue. Glu243 and Asn270 together coordinate ATP. 2 residues coordinate Zn(2+): Cys280 and Cys283.

The protein belongs to the arsA ATPase family. Homodimer. Component of the Golgi to ER traffic (GET) complex, which is composed of GET1, GET2 and GET3. Within the complex, GET1 and GET2 form a heterotetramer which is stabilized by phosphatidylinositol binding and which binds to the GET3 homodimer. Interacts with the chloride channel protein GEF1.

The protein resides in the cytoplasm. It is found in the endoplasmic reticulum. It localises to the golgi apparatus. In terms of biological role, ATPase required for the post-translational delivery of tail-anchored (TA) proteins to the endoplasmic reticulum. Recognizes and selectively binds the transmembrane domain of TA proteins in the cytosol. This complex then targets to the endoplasmic reticulum by membrane-bound receptors GET1 and GET2, where the tail-anchored protein is released for insertion. This process is regulated by ATP binding and hydrolysis. ATP binding drives the homodimer towards the closed dimer state, facilitating recognition of newly synthesized TA membrane proteins. ATP hydrolysis is required for insertion. Subsequently, the homodimer reverts towards the open dimer state, lowering its affinity for the GET1-GET2 receptor, and returning it to the cytosol to initiate a new round of targeting. Cooperates with the HDEL receptor ERD2 to mediate the ATP-dependent retrieval of resident ER proteins that contain a C-terminal H-D-E-L retention signal from the Golgi to the ER. Involved in low-level resistance to the oxyanions arsenite and arsenate, and in heat tolerance. The chain is ATPase GET3 from Clavispora lusitaniae (strain ATCC 42720) (Yeast).